We begin with the raw amino-acid sequence, 486 residues long: Vesicular GABA transporter (486 aa).

The Cytoplasmic portion of the chain corresponds to 1–93 (MASNRFQNLQ…EASEPISALQ (93 aa)). Positions 29 to 46 (LNEVPSYQNQPQTGESGS) are enriched in polar residues. The tract at residues 29–85 (LNEVPSYQNQPQTGESGSNPPPHDRLEPIQESVVSEQPQKDDINKQEEAKDDGHGEA) is disordered. Basic and acidic residues predominate over residues 66–85 (PQKDDINKQEEAKDDGHGEA). The chain crosses the membrane as a helical span at residues 94–114 (AAWNVTNAIQGMFIVGLPIAV). Topologically, residues 115 to 119 (KVGGW) are lumenal, vesicle. A helical membrane pass occupies residues 120–140 (WSIGAMVGVAYVCYWTGVLLI). At 141 to 167 (ECLYENGVKKRKTYREIADFYKPGFGK) the chain is on the cytoplasmic side. The helical transmembrane segment at 168–188 (WVLAAQLTELLSTCIIYLVLA) threads the bilayer. The Lumenal, vesicle segment spans residues 189–203 (ADLLQSCFPSVDKAG). A helical transmembrane segment spans residues 204–224 (WMMITSASLLTCSFLDDLQIV). Residues 225 to 228 (SRLS) lie on the Cytoplasmic side of the membrane. A helical transmembrane segment spans residues 229–249 (FFNAISHLIVNLIMVLYCLSF). Residues 250–263 (VSQWSFSTITFSLN) are Lumenal, vesicle-facing. A helical transmembrane segment spans residues 264–284 (INTLPTIVGMVVFGYTSHIFL). Topologically, residues 285–305 (PNLEGNMKNPAQFNVMLKWSH) are cytoplasmic. Residues 306-326 (IAAAVFKVVFGMLGFLTFGEL) form a helical membrane-spanning segment. Over 327–341 (TQEEISNSLPNQSFK) the chain is Lumenal, vesicle. N-linked (GlcNAc...) asparagine glycosylation occurs at Asn-337. A helical transmembrane segment spans residues 342-362 (ILVNLILVVKALLSYPLPFYA). The Cytoplasmic segment spans residues 363-398 (AVQLLKNNLFLGYPQTPFTSCYSPDKSLREWAVTLR). Residues 399 to 419 (IILVLFTLFVALSVPYLVELM) traverse the membrane as a helical segment. Over 420–421 (GL) the chain is Lumenal, vesicle. Residues 422–442 (VGNITGTMLSFIWPALFHLYI) form a helical membrane-spanning segment. Topologically, residues 443-457 (KEKTLNNFEKRFDQG) are cytoplasmic. A helical membrane pass occupies residues 458-478 (IIIMGCSVCISGVYFSSMELL). Over 479–486 (RAINSADS) the chain is Lumenal, vesicle.

Belongs to the amino acid/polyamine transporter 2 family.

It localises to the cytoplasmic vesicle membrane. Involved in the uptake of GABA into the synaptic vesicles. The sequence is that of Vesicular GABA transporter (unc-47) from Caenorhabditis elegans.